A 361-amino-acid polypeptide reads, in one-letter code: Ribosomal RNA small subunit methyltransferase H (361 aa).

S-adenosyl-L-methionine is bound by residues 54 to 56 (GGH), aspartate 74, tyrosine 101, aspartate 122, and glutamine 129. The tract at residues 318 to 361 (ARNSRASSAKLRAAQRLAEGQAPRPRRRNKYAPEGRDEPEGGAA) is disordered. Basic and acidic residues predominate over residues 348–361 (YAPEGRDEPEGGAA).

The protein belongs to the methyltransferase superfamily. RsmH family.

It is found in the cytoplasm. The catalysed reaction is cytidine(1402) in 16S rRNA + S-adenosyl-L-methionine = N(4)-methylcytidine(1402) in 16S rRNA + S-adenosyl-L-homocysteine + H(+). In terms of biological role, specifically methylates the N4 position of cytidine in position 1402 (C1402) of 16S rRNA. This Nitratidesulfovibrio vulgaris (strain DSM 19637 / Miyazaki F) (Desulfovibrio vulgaris) protein is Ribosomal RNA small subunit methyltransferase H.